The sequence spans 348 residues: MDLQTKLEQLFQQNNDTIKKVKSLDELNQIRVQLLGKKGPITGVLRGMKDLSAEERPKVGAFANKIRDDLSAVIEARKAQLEQAVINAKLASETVDVTLPGDPVEAGTPHIITQIMDDLEGFFMGMGYQVLTGPEVEEDHYNFEMMNIPKDHPARDMQETFYITNELLMRSQTSPMQARTMEKHDFTKGPLKMISPGVVYRRDDDDATHSHQFHQMEGLVIDKHITMADLKGTLLAMCQHVFGKDRTIRLRPSYFPFTEPSVEVDVSCFRCGGKGCPVCKYTGWIEVLGAGMVHPNVLQAANIDADVYGGFAFGLGPDRFAMLKYGIDDIRSFYTDDLRFLTQFSQEG.

Glu-259 provides a ligand contact to Mg(2+).

Belongs to the class-II aminoacyl-tRNA synthetase family. Phe-tRNA synthetase alpha subunit type 1 subfamily. In terms of assembly, tetramer of two alpha and two beta subunits. Mg(2+) serves as cofactor.

Its subcellular location is the cytoplasm. The enzyme catalyses tRNA(Phe) + L-phenylalanine + ATP = L-phenylalanyl-tRNA(Phe) + AMP + diphosphate + H(+). This Lacticaseibacillus casei (strain BL23) (Lactobacillus casei) protein is Phenylalanine--tRNA ligase alpha subunit.